Consider the following 33-residue polypeptide: Large ribosomal subunit protein eL28 (33 aa).

Belongs to the eukaryotic ribosomal protein eL28 family. Component of the large ribosomal subunit.

It localises to the cytoplasm. Component of the large ribosomal subunit. The ribosome is a large ribonucleoprotein complex responsible for the synthesis of proteins in the cell. The sequence is that of Large ribosomal subunit protein eL28 (rpl28) from Xenopus laevis (African clawed frog).